The following is a 421-amino-acid chain: Serine/threonine-protein kinase OXI1 (421 aa).

Positions 17-329 (LEVLSLLGRG…VEEIKGHDFF (313 aa)) constitute a Protein kinase domain. Residues 23–31 (LGRGAKGVV) and Lys-45 contribute to the ATP site. The Proton acceptor role is filled by Asp-149. The tract at residues 167–246 (DFDLSTNLAP…VGTEEYVAPE (80 aa)) is activation loop. A Phosphoserine; by PDPK1 modification is found at Ser-235. The AGC-kinase C-terminal domain maps to 330 to 421 (RGVDWEKVIL…LESDNNFLVF (92 aa)). Residues 418–421 (FLVF) carry the PIF motif.

This sequence belongs to the protein kinase superfamily. AGC Ser/Thr protein kinase family. As to quaternary structure, interacts with PDK1 and PDK2. In terms of tissue distribution, expressed in roots and root hair cells.

It carries out the reaction L-seryl-[protein] + ATP = O-phospho-L-seryl-[protein] + ADP + H(+). The enzyme catalyses L-threonyl-[protein] + ATP = O-phospho-L-threonyl-[protein] + ADP + H(+). With respect to regulation, activated in response to hydrogen peroxide and cellulase elicitor. Activated by PDK1 in a phosphatidic acid dependent manner. Its function is as follows. Involved in oxidative burst-mediated signaling. Required for basal resistance to P.parasitica infection and root hair growth. Partly required for the activation of MPK3 and MPK6 by hydrogen peroxide and cellulase elicitor. The sequence is that of Serine/threonine-protein kinase OXI1 from Arabidopsis thaliana (Mouse-ear cress).